The sequence spans 113 residues: U11-theraphotoxin-Hhn1m (113 aa).

The signal sequence occupies residues 1 to 21 (MNTVRGTFLLVFGLAASLGQA). Positions 22 to 74 (DKNENRREMQKKTEQGKSYLNFAENLLLQKLEELEAKLLEKHSKKSKNSRQKR) are excised as a propeptide. Cystine bridges form between cysteine 75–cysteine 90, cysteine 82–cysteine 95, and cysteine 89–cysteine 110.

Belongs to the neurotoxin 14 (magi-1) family. 01 (HNTX-16) subfamily. Expressed by the venom gland.

It localises to the secreted. In terms of biological role, probable ion channel inhibitor. The chain is U11-theraphotoxin-Hhn1m from Cyriopagopus hainanus (Chinese bird spider).